Reading from the N-terminus, the 358-residue chain is UDP-3-O-acylglucosamine N-acyltransferase (358 aa).

Histidine 248 (proton acceptor) is an active-site residue.

It belongs to the transferase hexapeptide repeat family. LpxD subfamily. In terms of assembly, homotrimer.

It carries out the reaction a UDP-3-O-[(3R)-3-hydroxyacyl]-alpha-D-glucosamine + a (3R)-hydroxyacyl-[ACP] = a UDP-2-N,3-O-bis[(3R)-3-hydroxyacyl]-alpha-D-glucosamine + holo-[ACP] + H(+). Its pathway is bacterial outer membrane biogenesis; LPS lipid A biosynthesis. Functionally, catalyzes the N-acylation of UDP-3-O-acylglucosamine using 3-hydroxyacyl-ACP as the acyl donor. Is involved in the biosynthesis of lipid A, a phosphorylated glycolipid that anchors the lipopolysaccharide to the outer membrane of the cell. This is UDP-3-O-acylglucosamine N-acyltransferase from Synechococcus sp. (strain WH7803).